The following is a 377-amino-acid chain: [2-(trimethylamino)ethyl]phosphonate dioxygenase (377 aa).

Residues 95 to 119 (DTDQSSEVGRTSPDVETWDSSQPAP) form a disordered region. Asparagine 187 is a binding site for [2-(trimethylamino)ethyl]phosphonate. Histidine 198 serves as a coordination point for 2-oxoglutarate. The Fe(2+) site is built by histidine 198 and aspartate 200. Aspartate 200, asparagine 201, tyrosine 203, asparagine 286, and arginine 288 together coordinate [2-(trimethylamino)ethyl]phosphonate. Histidine 341, arginine 343, and arginine 352 together coordinate 2-oxoglutarate. Histidine 341 is a Fe(2+) binding site.

The protein belongs to the gamma-BBH/TMLD family. Homodimer. Requires Fe(2+) as cofactor. It depends on L-ascorbate as a cofactor.

The catalysed reaction is [2-(trimethylamino)ethyl]phosphonate + 2-oxoglutarate + O2 = [(1R)-1-hydroxy-2-(trimethylamino)ethyl]phosphonate + succinate + CO2. Involved in the degradation of the naturally occurring organophosphonate 2-(trimethylammonio)ethylphosphonate (TMAEP). Catalyzes the hydroxylation of TMAEP to (R)-1-hydroxy-2-(trimethylammonio)ethylphosphonate (OH-TMAEP). Is highly specific for its N-trimethylated substrate. Cannot use gamma-butyrobetaine as substrate. The protein is [2-(trimethylamino)ethyl]phosphonate dioxygenase of Leisingera caerulea (Phaeobacter caeruleus).